The following is a 551-amino-acid chain: GMP synthase [glutamine-hydrolyzing] (551 aa).

The interval 1 to 28 (MTSSPTAAARTEGEAAPTVPTQVESGTA) is disordered. Residues 19-28 (VPTQVESGTA) show a composition bias toward polar residues. In terms of domain architecture, Glutamine amidotransferase type-1 spans 37–227 (MVAILDFGSQ…VYHICGCEPE (191 aa)). Catalysis depends on Cys-114, which acts as the Nucleophile. Residues His-201 and Glu-203 contribute to the active site. In terms of domain architecture, GMPS ATP-PPase spans 228–426 (WTTAAFIEEA…LGLPEEIVQR (199 aa)). 255–261 (SGGVDSS) is a binding site for ATP.

Homodimer.

It carries out the reaction XMP + L-glutamine + ATP + H2O = GMP + L-glutamate + AMP + diphosphate + 2 H(+). The protein operates within purine metabolism; GMP biosynthesis; GMP from XMP (L-Gln route): step 1/1. Functionally, catalyzes the synthesis of GMP from XMP. The protein is GMP synthase [glutamine-hydrolyzing] of Gloeobacter violaceus (strain ATCC 29082 / PCC 7421).